A 262-amino-acid polypeptide reads, in one-letter code: Abhydrolase domain-containing protein ACTT2-2 (262 aa).

Positions 260 to 262 (SKL) match the Peroxisomal targeting signal type 1 motif.

It belongs to the AB hydrolase superfamily. AKT2 hydrolase family.

It localises to the peroxisome. It functions in the pathway mycotoxin biosynthesis. Functionally, abhydrolase domain-containing protein; part of the gene clusters that mediate the biosynthesis of the host-selective toxins (HSTs) ACT-toxins responsible for brown spot of tangerine disease by the tangerine pathotype which affects tangerines and mandarins. ACT-toxins consist of three moieties, 9,10-epoxy-8-hydroxy-9-methyl-decatrienoic acid (EDA), valine and a polyketide. ACT-toxin I is toxic to both citrus and pear; toxin II the 5''-deoxy derivative of ACT-toxin I, is highly toxic to pear and slightly toxic to citrus. On cellular level, ACT-toxins affect plasma membrane of susceptible cells and cause a sudden increase in loss of K(+) after a few minutes of toxin treatment. The acyl-CoA ligase ACTT1, the hydrolase ACTT2, the enoyl-CoA hydratases ACTT3 and ACTT6, and the acyl-CoA synthetase ACTT5 are all involved in the biosynthesis of the AK-, AF- and ACT-toxin common 9,10-epoxy-8-hydroxy-9-methyl-decatrienoic acid (EDA) structural moiety. The exact role of each enzyme, and of additional enzymes identified within the AF-toxin clusters have still to be determined. On the other hand, ACTTS1 to ACTTS4 are specific to the tangerine pathotype. The function of ACTTS3 is to elongate the polyketide chain portion of ACT-toxin that is unique to this toxin. The enoyl-reductase ACTTS2 might complement the missing enoyl-reductase (ER) domain in ACTTS3 in the synthesis of the polyketide portion of ACT-toxin. The roles of the nonribosomal peptide synthetases-related proteins ACTTS1 and ACTTS4 have also still not been elucidated. The protein is Abhydrolase domain-containing protein ACTT2-2 (ACTT2-2) of Alternaria alternata (Alternaria rot fungus).